We begin with the raw amino-acid sequence, 120 residues long: Small ribosomal subunit protein bS16 (120 aa).

The segment at 81–120 (GLAKRPTRNNPQKAEPGEKAKERAAKRAEKAAAPAEDAAA) is disordered. Over residues 95–110 (EPGEKAKERAAKRAEK) the composition is skewed to basic and acidic residues. A compositionally biased stretch (low complexity) spans 111-120 (AAAPAEDAAA).

Belongs to the bacterial ribosomal protein bS16 family.

The protein is Small ribosomal subunit protein bS16 of Methylorubrum extorquens (strain CM4 / NCIMB 13688) (Methylobacterium extorquens).